The chain runs to 454 residues: Aquaglyceroporin-9 (454 aa).

Over 1 to 186 the chain is Cytoplasmic; sequence MEGGLRSPLN…RHTMREPFSE (186 aa). Residues 187 to 207 traverse the membrane as a helical segment; that stretch reads FFGVFILILFGDGVVAQVVLS. Over 208-216 the chain is Extracellular; the sequence is SGERGSYQS. Residues 217–237 form a helical membrane-spanning segment; that stretch reads ISWGWGIGVMLGVYASGVSGA. At 238–257 the chain is on the cytoplasmic side; sequence HINPAVTFANCIFRKFPWRK. Residues 240–242 carry the NPA 1 motif; sequence NPA. Residues 258–278 form a helical membrane-spanning segment; it reads FPIYMLAQVLGAMCASGVVYA. Over 279–316 the chain is Extracellular; the sequence is NYKSAIDMFEGGNNIRTVGLNTSSAGIFCTYPAPFMTK. An N-linked (GlcNAc...) asparagine glycan is attached at asparagine 299. Residues 317-337 form a helical membrane-spanning segment; the sequence is TGQFFSEFVASTILMFCIYAL. The Cytoplasmic segment spans residues 338-351; the sequence is QDNGNLGSGNLTPL. Residues 352 to 372 traverse the membrane as a helical segment; sequence GLFFVIFGIGACFGWETGYAI. An NPA 2 motif is present at residues 373–375; that stretch reads NLA. Residues 373–403 are Extracellular-facing; sequence NLARDFGPRLMSYFLGYGHEVWSAGNYYFWV. A helical membrane pass occupies residues 404–424; it reads PMVAPFIGCLFGGWLYDVFIF. Residues 425–454 are Cytoplasmic-facing; the sequence is TGESPINTPWMGLKRLMPGGLGSKKVDSKV.

The protein belongs to the MIP/aquaporin (TC 1.A.8) family.

Its subcellular location is the membrane. It carries out the reaction H2O(in) = H2O(out). It catalyses the reaction glycerol(in) = glycerol(out). In terms of biological role, water channel required to facilitate the transport of water across membranes. May play a role in the vegetative growth and pathogenicity. This chain is Aquaglyceroporin-9, found in Botryotinia fuckeliana (strain B05.10) (Noble rot fungus).